Here is a 312-residue protein sequence, read N- to C-terminus: Malate dehydrogenase (312 aa).

NAD(+) contacts are provided by residues 12-17 (GAGFTG) and Asp-36. Residues Arg-87 and Arg-93 each coordinate substrate. Residues Asn-100 and 123–125 (LTN) each bind NAD(+). Position 125 (Asn-125) interacts with substrate. Ser-149 bears the Phosphoserine mark. Arg-156 is a substrate binding site. The Proton acceptor role is filled by His-180.

Belongs to the LDH/MDH superfamily. MDH type 3 family.

It carries out the reaction (S)-malate + NAD(+) = oxaloacetate + NADH + H(+). Catalyzes the reversible oxidation of malate to oxaloacetate. This Bacillus cytotoxicus (strain DSM 22905 / CIP 110041 / 391-98 / NVH 391-98) protein is Malate dehydrogenase.